Consider the following 920-residue polypeptide: 2-oxoadipate dehydrogenase complex component E1 (920 aa).

Residues Lys183 and Lys188 each carry the N6-succinyllysine modification. A disordered region spans residues 299-318 (GKTRGRQQSQEDGDYSPNGS). N6-succinyllysine occurs at positions 800 and 818.

It belongs to the alpha-ketoglutarate dehydrogenase family. As to quaternary structure, the 2-oxoadipate dehydrogenase complex is composed of OADH (2-oxoadipate dehydrogenase; E1a), DLST (dihydrolipoamide succinyltransferase; E2) and DLD (dihydrolipoamide dehydrogenase; E3). E1a functional unit is a dimer. It depends on thiamine diphosphate as a cofactor.

The protein resides in the mitochondrion. It carries out the reaction N(6)-[(R)-lipoyl]-L-lysyl-[protein] + 2-oxoadipate + H(+) = N(6)-[(R)-S(8)-glutaryldihydrolipoyl]-L-lysyl-[protein] + CO2. Its pathway is amino-acid degradation. Functionally, 2-oxoadipate dehydrogenase (E1a) component of the 2-oxoadipate dehydrogenase complex (OADHC). Participates in the first step, rate limiting for the overall conversion of 2-oxoadipate (alpha-ketoadipate) to glutaryl-CoA and CO(2) catalyzed by the whole OADHC. Catalyzes the irreversible decarboxylation of 2-oxoadipate via the thiamine diphosphate (ThDP) cofactor and subsequent transfer of the decarboxylated acyl intermediate on an oxidized dihydrolipoyl group that is covalently amidated to the E2 enzyme (dihydrolipoyllysine-residue succinyltransferase or DLST). Can catalyze the decarboxylation of 2-oxoglutarate in vitro, but at a much lower rate than 2-oxoadipate. Responsible for the last step of L-lysine, L-hydroxylysine and L-tryptophan catabolism with the common product being 2-oxoadipate. This Rattus norvegicus (Rat) protein is 2-oxoadipate dehydrogenase complex component E1 (Dhtkd1).